The primary structure comprises 120 residues: Ribonuclease P protein component (120 aa).

This sequence belongs to the RnpA family. As to quaternary structure, consists of a catalytic RNA component (M1 or rnpB) and a protein subunit.

It carries out the reaction Endonucleolytic cleavage of RNA, removing 5'-extranucleotides from tRNA precursor.. In terms of biological role, RNaseP catalyzes the removal of the 5'-leader sequence from pre-tRNA to produce the mature 5'-terminus. It can also cleave other RNA substrates such as 4.5S RNA. The protein component plays an auxiliary but essential role in vivo by binding to the 5'-leader sequence and broadening the substrate specificity of the ribozyme. The polypeptide is Ribonuclease P protein component (Mycobacterium leprae (strain Br4923)).